The chain runs to 679 residues: Leucine-rich repeat, immunoglobulin-like domain and transmembrane domain-containing protein 3 (679 aa).

The signal sequence occupies residues 1–19 (MHLFACLCIVLSFLEGVGC). Residues 20-582 (LCPSQCTCDY…RVEGDDSQWS (563 aa)) lie on the Lumenal side of the membrane. 5 LRR repeats span residues 56–79 (PVDTVKLRIEKTVIRRISAEAFYY), 80–103 (LVELQYLWVTYNSVASIDPSSFYN), 104–128 (LKQLHELRLDGNSLAAFPWASLLDM), 129–151 (PLLRTLDLHNNKITSVPNEALRY), and 152–175 (LKNLAYLDLSSNRLTTLPPDFLES). Residues 201–253 (NPWFCDCHISKMIELSKVVDPAIVLLDPLMTCSEPERLTGILFQRAELEHCLK) form the LRRCT domain. An Ig-like domain is found at 254–344 (PSVMTSATKI…GMSEAVVTVT (91 aa)). A disulfide bond links cysteine 275 and cysteine 328. N-linked (GlcNAc...) asparagine glycosylation is present at asparagine 296. The segment at 351 to 375 (TPIPPDTSERTGDHPEWDVQPGSGR) is disordered. The segment covering 357-367 (TSERTGDHPEW) has biased composition (basic and acidic residues). The Fibronectin type-III domain occupies 486–574 (AIENLRVVSE…QCITFSTERV (89 aa)). Residues 583–603 (LLLVVTSTACVVILPLICFLL) traverse the membrane as a helical segment. The Cytoplasmic portion of the chain corresponds to 604–679 (YKVCKLQCKS…SEGSRPEYYC (76 aa)).

Glycosylated. In terms of tissue distribution, detected in the outer plexiform layer (OPL) of the retina where it localizes to ON-bipolar cells (at protein level).

Its subcellular location is the cell projection. It localises to the dendrite. The protein resides in the perikaryon. It is found in the endoplasmic reticulum membrane. In terms of biological role, plays a role in the synapse formation and synaptic transmission between cone photoreceptor cells and retinal bipolar cells. Required for normal transmission of a light-evoked stimulus from the cone photoreceptor cells to the ON-bipolar cells and ON-ganglion cells in the inner retina. Required in retinal ON-bipolar cells for normal localization of the cation channel TRPM1 at dendrite tips. Seems to play a specific role in synaptic contacts made by ON-bipolar cells with cone photoreceptor pedicles. May also have a role in cone synapse formation. Might facilitate FGFR1 exit from the endoplasmic reticulum to the Golgi. Could be a regulator of the FGFRs. The polypeptide is Leucine-rich repeat, immunoglobulin-like domain and transmembrane domain-containing protein 3 (LRIT3) (Homo sapiens (Human)).